Reading from the N-terminus, the 414-residue chain is NAC domain-containing protein 35 (414 aa).

The span at 1-21 (MAIVSSTTSIIPMSNQVNNNE) shows a compositional bias: polar residues. The interval 1 to 47 (MAIVSSTTSIIPMSNQVNNNEKGIEDNDHRGGQESHVQNEDEADDHD) is disordered. Residues 22 to 47 (KGIEDNDHRGGQESHVQNEDEADDHD) show a composition bias toward basic and acidic residues. Positions 51-198 (VMPGFRFHPT…EISLCRVYKR (148 aa)) constitute an NAC domain. Residues 149 to 204 (IGLKKTLVFYSGKAPKGTRTSWIMNEYRLPHHETEKYQKAEISLCRVYKRPGVEDH) mediate DNA binding. A disordered region spans residues 200–251 (GVEDHPSVPRSLSTRHHNHNSSTSSRLALRQQQHHSSSSNHSDNNLNNNNNI). Over residues 233–251 (HHSSSSNHSDNNLNNNNNI) the composition is skewed to low complexity.

Expressed in aerial organs in early stages of seedling development.

Its subcellular location is the nucleus. Its function is as follows. Transcription factor that acts as a floral repressor. Controls flowering time by negatively regulating CONSTANS (CO) expression in a GIGANTEA (GI)-independent manner. Regulates the plant cold response by positive regulation of the cold response genes COR15A and KIN1. May coordinate cold response and flowering time. This is NAC domain-containing protein 35 from Arabidopsis thaliana (Mouse-ear cress).